A 233-amino-acid polypeptide reads, in one-letter code: Superoxide dismutase [Mn] 3.4, mitochondrial (233 aa).

A mitochondrion-targeting transit peptide spans 1–29; that stretch reads MALRTLASKNALSFALGGAARPSAASARG. The Mn(2+) site is built by histidine 57, histidine 105, aspartate 194, and histidine 198.

Belongs to the iron/manganese superoxide dismutase family. In terms of assembly, homotetramer. Mn(2+) is required as a cofactor.

Its subcellular location is the mitochondrion matrix. It catalyses the reaction 2 superoxide + 2 H(+) = H2O2 + O2. In terms of biological role, destroys superoxide anion radicals which are normally produced within the cells and which are toxic to biological systems. The polypeptide is Superoxide dismutase [Mn] 3.4, mitochondrial (SODA.3) (Zea mays (Maize)).